We begin with the raw amino-acid sequence, 937 residues long: CAP-Gly domain-containing linker protein 1 homolog (937 aa).

A CAP-Gly domain is found at 39–81 (GPIHGKDGMFCGIELLEPNGKHDGTFQGVSYFIATPYHGIFAP). Disordered regions lie at residues 90 to 131 (EELP…VMST) and 264 to 548 (LPND…SRLQ). A compositionally biased stretch (polar residues) spans 268 to 281 (LNANFSNKNSTTTF). The span at 285 to 295 (ETPKVEIRENG) shows a compositional bias: basic and acidic residues. Residues 296-309 (NLDNSIETPPQQSP) are compositionally biased toward polar residues. 4 stretches are compositionally biased toward basic and acidic residues: residues 317-353 (HESD…KEEP), 383-396 (IEAE…EIKS), 409-424 (PQKE…ETPR), and 463-473 (AKERVEKEKKI). Low complexity predominate over residues 492 to 501 (SSIPSTSSAS). Coiled-coil stretches lie at residues 566-740 (EDNE…VDEI) and 773-800 (QQIE…DLMQ). 2 disordered regions span residues 819–866 (MESR…DSMN) and 916–937 (PTIK…GLVM). The span at 832–844 (RSRSSASGSRPIS) shows a compositional bias: low complexity. The segment covering 845–858 (MATSNGGDQRLSTS) has biased composition (polar residues).

The protein is CAP-Gly domain-containing linker protein 1 homolog of Caenorhabditis elegans.